Reading from the N-terminus, the 207-residue chain is Guanylate kinase (207 aa).

Residues 4 to 184 form the Guanylate kinase-like domain; the sequence is GTLYIVSAPS…ALMDFKAIIR (181 aa). 11–18 contacts ATP; sequence APSGAGKS.

Belongs to the guanylate kinase family.

The protein resides in the cytoplasm. The catalysed reaction is GMP + ATP = GDP + ADP. The enzyme catalyses dZMP + ATP = dZDP + ADP. It participates in purine metabolism. In terms of biological role, essential for recycling GMP and indirectly, cGMP. Its function is as follows. (Microbial infection) Catalyzes the phosphorylation of dZMP to dZDP, when the bacterium is infected by a phage that produces the substrate for the synthesis of dZTP (2- amino-2'-deoxyadenosine 5'-triphosphate), which is then used by the phage as a DNA polymerase substrate. This chain is Guanylate kinase (gmk), found in Vibrio cholerae serotype O1 (strain ATCC 39315 / El Tor Inaba N16961).